A 431-amino-acid polypeptide reads, in one-letter code: Serine/threonine-protein kinase Sgk1 (431 aa).

Positions 1-60 (MTVKTEAARGPLTYSRMRGMVAILIAFMKQRRMGLNDFIQKIANNSYACKHTEVQSILKI) are necessary for localization to the mitochondria. The interval 66–92 (PELMNANPSPPPSPSQQINLGPSSNPH) is disordered. Ser74 is modified (phosphoserine). The residue at position 78 (Ser78) is a Phosphoserine; by MAPK7. A compositionally biased stretch (polar residues) spans 81-91 (QQINLGPSSNP). In terms of domain architecture, Protein kinase spans 98–355 (FHFLKVIGKG…FMEIRNHVFF (258 aa)). Residues 104–112 (IGKGSFGKV) and Lys127 contribute to the ATP site. Residues 131–141 (KKAILKKKEEK) carry the Nuclear localization signal motif. The Proton acceptor role is filled by Asp222. Residue Thr256 is modified to Phosphothreonine; by PDPK1. The AGC-kinase C-terminal domain occupies 356–431 (SLINWDDLIN…SYAPPMDSFL (76 aa)). Thr369 bears the Phosphothreonine; by PKA mark. 3 positions are modified to phosphoserine: Ser397, Ser401, and Ser422.

It belongs to the protein kinase superfamily. AGC Ser/Thr protein kinase family. In terms of assembly, homodimer; disulfide-linked. Forms a trimeric complex with FBXW7 and NOTCH1. Interacts with MAPK3/ERK1, MAPK1/ERK2, MAP2K1/MEK1, MAP2K2/MEK2, NEDD4, NEDD4L, MAPT/TAU, MAPK7, CREB1, SLC9A3R2/NHERF2 and KCNJ1/ROMK1. Associates with the mammalian target of rapamycin complex 2 (mTORC2) via an interaction with MAPKAP1/SIN1. Regulated by phosphorylation. Activated by phosphorylation on Ser-422 by mTORC2, transforming it into a substrate for PDPK1 which phosphorylates it on Thr-256. Phosphorylation on Ser-397 and Ser-401 are also essential for its activity. Phosphorylation on Ser-78 by MAPK7 is required for growth factor-induced cell cycle progression. Post-translationally, ubiquitinated by NEDD4L; which promotes proteasomal degradation. Ubiquitinated by SYVN1 at the endoplasmic reticulum; which promotes rapid proteasomal degradation and maintains a high turnover rate in resting cells.

The protein localises to the cytoplasm. Its subcellular location is the nucleus. It is found in the endoplasmic reticulum membrane. The protein resides in the cell membrane. It localises to the mitochondrion. The enzyme catalyses L-seryl-[protein] + ATP = O-phospho-L-seryl-[protein] + ADP + H(+). It carries out the reaction L-threonyl-[protein] + ATP = O-phospho-L-threonyl-[protein] + ADP + H(+). With respect to regulation, two specific sites, one in the kinase domain (Thr-256) and the other in the C-terminal regulatory region (Ser-422), need to be phosphorylated for its full activation. Phosphorylation at Ser-397 and Ser-401 are also essential for its activity. Activated by WNK1, WNK2, WNK3 and WNK4; which promote phosphorylation by mTORC2. Functionally, serine/threonine-protein kinase which is involved in the regulation of a wide variety of ion channels, membrane transporters, cellular enzymes, transcription factors, neuronal excitability, cell growth, proliferation, survival, migration and apoptosis. Plays an important role in cellular stress response. Contributes to regulation of renal Na(+) retention, renal K(+) elimination, salt appetite, gastric acid secretion, intestinal Na(+)/H(+) exchange and nutrient transport, insulin-dependent salt sensitivity of blood pressure, salt sensitivity of peripheral glucose uptake, cardiac repolarization and memory consolidation. Up-regulates Na(+) channels: SCNN1A/ENAC, SCN5A and ASIC1/ACCN2, K(+) channels: KCNJ1/ROMK1, KCNA1-5, KCNQ1-5 and KCNE1, epithelial Ca(2+) channels: TRPV5 and TRPV6, chloride channels: BSND, CLCN2 and CFTR, glutamate transporters: SLC1A3/EAAT1, SLC1A2 /EAAT2, SLC1A1/EAAT3, SLC1A6/EAAT4 and SLC1A7/EAAT5, amino acid transporters: SLC1A5/ASCT2, SLC38A1/SN1 and SLC6A19, creatine transporter: SLC6A8, Na(+)/dicarboxylate cotransporter: SLC13A2/NADC1, Na(+)-dependent phosphate cotransporter: SLC34A2/NAPI-2B, glutamate receptor: GRIK2/GLUR6. Up-regulates carriers: SLC9A3/NHE3, SLC12A1/NKCC2, SLC12A3/NCC, SLC5A3/SMIT, SLC2A1/GLUT1, SLC5A1/SGLT1 and SLC15A2/PEPT2. Regulates enzymes: GSK3A/B, PMM2 and Na(+)/K(+) ATPase, and transcription factors: CTNNB1 and nuclear factor NF-kappa-B. Stimulates sodium transport into epithelial cells by enhancing the stability and expression of SCNN1A/ENAC. This is achieved by phosphorylating the NEDD4L ubiquitin E3 ligase, promoting its interaction with 14-3-3 proteins, thereby preventing it from binding to SCNN1A/ENAC and targeting it for degradation. Regulates store-operated Ca(+2) entry (SOCE) by stimulating ORAI1 and STIM1. Regulates KCNJ1/ROMK1 directly via its phosphorylation or indirectly via increased interaction with SLC9A3R2/NHERF2. Phosphorylates MDM2 and activates MDM2-dependent ubiquitination of p53/TP53. Phosphorylates MAPT/TAU and mediates microtubule depolymerization and neurite formation in hippocampal neurons. Phosphorylates SLC2A4/GLUT4 and up-regulates its activity. Phosphorylates APBB1/FE65 and promotes its localization to the nucleus. Phosphorylates MAPK1/ERK2 and activates it by enhancing its interaction with MAP2K1/MEK1 and MAP2K2/MEK2. Phosphorylates FBXW7 and plays an inhibitory role in the NOTCH1 signaling. Phosphorylates FOXO1 resulting in its relocalization from the nucleus to the cytoplasm. Phosphorylates FOXO3, promoting its exit from the nucleus and interference with FOXO3-dependent transcription. Phosphorylates BRAF and MAP3K3/MEKK3 and inhibits their activity. Phosphorylates SLC9A3/NHE3 in response to dexamethasone, resulting in its activation and increased localization at the cell membrane. Phosphorylates CREB1. Necessary for vascular remodeling during angiogenesis. In Oryctolagus cuniculus (Rabbit), this protein is Serine/threonine-protein kinase Sgk1 (SGK1).